The following is a 263-amino-acid chain: Shikimate dehydrogenase (NADP(+)) (263 aa).

Shikimate is bound by residues 14-16 and T60; that span reads SLS. The active-site Proton acceptor is K64. Shikimate contacts are provided by N85 and D100. Residues 123–127, 146–151, and L205 each bind NADP(+); these read GAGGA and NRTPQR. Y207 provides a ligand contact to shikimate. G228 lines the NADP(+) pocket. Residue Q235 coordinates shikimate.

The protein belongs to the shikimate dehydrogenase family. As to quaternary structure, homodimer.

It carries out the reaction shikimate + NADP(+) = 3-dehydroshikimate + NADPH + H(+). The protein operates within metabolic intermediate biosynthesis; chorismate biosynthesis; chorismate from D-erythrose 4-phosphate and phosphoenolpyruvate: step 4/7. Its function is as follows. Involved in the biosynthesis of the chorismate, which leads to the biosynthesis of aromatic amino acids. Catalyzes the reversible NADPH linked reduction of 3-dehydroshikimate (DHSA) to yield shikimate (SA). In Thermus thermophilus (strain ATCC 27634 / DSM 579 / HB8), this protein is Shikimate dehydrogenase (NADP(+)).